We begin with the raw amino-acid sequence, 467 residues long: Glutamate--tRNA ligase (467 aa).

Positions 9-19 (PSPTGFLHIGG) match the 'HIGH' region motif. The 'KMSKS' region motif lies at 250-254 (KLSKR). Lysine 253 contacts ATP.

Belongs to the class-I aminoacyl-tRNA synthetase family. Glutamate--tRNA ligase type 1 subfamily. Monomer.

The protein resides in the cytoplasm. It carries out the reaction tRNA(Glu) + L-glutamate + ATP = L-glutamyl-tRNA(Glu) + AMP + diphosphate. In terms of biological role, catalyzes the attachment of glutamate to tRNA(Glu) in a two-step reaction: glutamate is first activated by ATP to form Glu-AMP and then transferred to the acceptor end of tRNA(Glu). In Mesomycoplasma hyopneumoniae (strain 7448) (Mycoplasma hyopneumoniae), this protein is Glutamate--tRNA ligase.